We begin with the raw amino-acid sequence, 265 residues long: Short-chain dehydrogenase/reductase fsr5 (265 aa).

A signal peptide spans 1 to 32 (MASLGKYVSKLAGSRVLVIGGSSGIGFGVAEA). NADP(+) is bound by residues serine 22, serine 23, isoleucine 25, serine 45, and lysine 50. N-linked (GlcNAc...) asparagine glycosylation is present at asparagine 62. Asparagine 88, arginine 130, and threonine 204 together coordinate NADP(+). N-linked (GlcNAc...) asparagine glycans are attached at residues asparagine 218 and asparagine 250.

It belongs to the short-chain dehydrogenases/reductases (SDR) family.

In terms of biological role, short-chain dehydrogenase/reductase; part of the gene cluster that mediates the biosynthesis of fusarubins, highly pigmented naphthoquinones responsible for the coloration of the fruiting bodies. The non-reducing polyketide synthase FSR1 is responsible for the condensation of seven acetyl-CoA units to yield a haptaketide. After rings A and B are formed by aldol-type cyclization, the PKS-derived product is released as 6-O-demethylfusarubinaldehyde. Then, two hydroxyl groups at C-5 and C-10 are incorporated by FSR3, and simultaneously hydroxyl groups at C-6 and C-8 are methylated by FSR2. The aldehyde is, on the one hand, reduced by FSR3 to 8-O-methylfusarubin alcohol, which equilibrates mainly with 8-O-methylfusarubin and only small amounts of 8-O-methylnectriafurone. On the other hand, the aldehyde can be oxidized to form 8-O-methylfusarubinic acid, a reaction driven by FSR3 equilibrating with 8-O-methylfusarubinlactone, finally resulting in 8-O-methylanhydrofusarubinlactol after a further reduction step and loss of water. 8-O-Methylfusarubinic acid can also undergo decarboxylation, resulting in 8-O-methyl-13-hydroxynorjavanicin after another hydroxylation step at C-13. Both steps are most likely also accomplished by FSR3. No enzymatic function has been determined so far for either FSR4 and FSR5. Their deletion does not alter the product spectrum, but the possibility that they catalyze specific enzymatic steps during perithecium development cannot be ruled out. FSR4 might possess a regulatory function in the biosynthesis of fusarubins. This Gibberella fujikuroi (strain CBS 195.34 / IMI 58289 / NRRL A-6831) (Bakanae and foot rot disease fungus) protein is Short-chain dehydrogenase/reductase fsr5.